The sequence spans 106 residues: ATP-dependent Clp protease adapter protein ClpS (106 aa).

The protein belongs to the ClpS family. In terms of assembly, binds to the N-terminal domain of the chaperone ClpA.

Functionally, involved in the modulation of the specificity of the ClpAP-mediated ATP-dependent protein degradation. In Escherichia coli O127:H6 (strain E2348/69 / EPEC), this protein is ATP-dependent Clp protease adapter protein ClpS.